The sequence spans 389 residues: Homoserine O-acetyltransferase (389 aa).

A disordered region spans residues 1–21 (MAALRAGKTNNEADQPSSPVL). Residues 8–18 (KTNNEADQPSS) show a composition bias toward polar residues. Residues 56–366 (NAILVCHALT…DRGHDAFLLD (311 aa)) form the AB hydrolase-1 domain. The Nucleophile role is filled by S161. R231 contacts substrate. Catalysis depends on residues D327 and H360. D361 is a substrate binding site.

The protein belongs to the AB hydrolase superfamily. MetX family. In terms of assembly, homodimer.

The protein localises to the cytoplasm. It carries out the reaction L-homoserine + acetyl-CoA = O-acetyl-L-homoserine + CoA. It functions in the pathway amino-acid biosynthesis; L-methionine biosynthesis via de novo pathway; O-acetyl-L-homoserine from L-homoserine: step 1/1. Functionally, transfers an acetyl group from acetyl-CoA to L-homoserine, forming acetyl-L-homoserine. This is Homoserine O-acetyltransferase from Mesorhizobium japonicum (strain LMG 29417 / CECT 9101 / MAFF 303099) (Mesorhizobium loti (strain MAFF 303099)).